Reading from the N-terminus, the 302-residue chain is Formylmethanofuran--tetrahydromethanopterin formyltransferase (302 aa).

It belongs to the FTR family. In terms of assembly, homotetramer.

Its subcellular location is the cytoplasm. It catalyses the reaction N-formylmethanofuran + 5,6,7,8-tetrahydromethanopterin + H(+) = N(5)-formyl-5,6,7,8-tetrahydromethanopterin + methanofuran. The protein operates within one-carbon metabolism; formaldehyde degradation; formate from formaldehyde (H(4)MPT route): step 4/5. Catalyzes the transfer of a formyl group from 5-formyl tetrahydromethanopterin (5-formyl-H(4)MPT) to methanofuran (MFR) to produce formylmethanofuran (formyl-MFR) and tetrahydromethanopterin (H(4)MPT). The sequence is that of Formylmethanofuran--tetrahydromethanopterin formyltransferase from Methylobacillus flagellatus (strain ATCC 51484 / DSM 6875 / VKM B-1610 / KT).